The primary structure comprises 165 residues: Large ribosomal subunit protein uL15 (165 aa).

The tract at residues 1–44 (MSLNQLKAPRGANRAKKRVGRGQGSGLGKTAGRGGKGQKARSGN) is disordered. Residues 21–37 (RGQGSGLGKTAGRGGKG) show a composition bias toward gly residues.

The protein belongs to the universal ribosomal protein uL15 family. As to quaternary structure, part of the 50S ribosomal subunit.

In terms of biological role, binds to the 23S rRNA. The polypeptide is Large ribosomal subunit protein uL15 (Anaeromyxobacter dehalogenans (strain 2CP-1 / ATCC BAA-258)).